The chain runs to 319 residues: NADH-quinone oxidoreductase subunit H 1 (319 aa).

A run of 8 helical transmembrane segments spans residues 8–28 (LFNI…LIWI), 74–94 (LVFI…FAVI), 107–127 (IGLL…VLGG), 147–167 (LSYE…AGTF), 179–199 (MWFC…GIAE), 230–250 (FFVG…TLFF), 258–278 (LPPL…FILL), and 297–317 (LMLP…LALD).

This sequence belongs to the complex I subunit 1 family. NDH-1 is composed of 14 different subunits. Subunits NuoA, H, J, K, L, M, N constitute the membrane sector of the complex.

Its subcellular location is the cell inner membrane. The enzyme catalyses a quinone + NADH + 5 H(+)(in) = a quinol + NAD(+) + 4 H(+)(out). In terms of biological role, NDH-1 shuttles electrons from NADH, via FMN and iron-sulfur (Fe-S) centers, to quinones in the respiratory chain. The immediate electron acceptor for the enzyme in this species is believed to be ubiquinone. Couples the redox reaction to proton translocation (for every two electrons transferred, four hydrogen ions are translocated across the cytoplasmic membrane), and thus conserves the redox energy in a proton gradient. This subunit may bind ubiquinone. This is NADH-quinone oxidoreductase subunit H 1 from Nitrosococcus oceani (strain ATCC 19707 / BCRC 17464 / JCM 30415 / NCIMB 11848 / C-107).